Here is a 65-residue protein sequence, read N- to C-terminus: U15-hexatoxin-Mg1a (65 aa).

Contains 4 disulfide bonds. Expressed by the venom gland.

The protein resides in the secreted. Functionally, intrathorax injection into crickets causes paralysis prolonged for more than 60 minutes, followed by recovery. The chain is U15-hexatoxin-Mg1a from Macrothele gigas (Japanese funnel web spider).